Consider the following 40-residue polypeptide: Photosystem II reaction center protein L (40 aa).

Residues Ser19–Phe39 traverse the membrane as a helical segment.

This sequence belongs to the PsbL family. As to quaternary structure, PSII is composed of 1 copy each of membrane proteins PsbA, PsbB, PsbC, PsbD, PsbE, PsbF, PsbH, PsbI, PsbJ, PsbK, PsbL, PsbM, PsbT, PsbX, PsbY, PsbZ, Psb30/Ycf12, at least 3 peripheral proteins of the oxygen-evolving complex and a large number of cofactors. It forms dimeric complexes.

The protein resides in the plastid. It localises to the chloroplast thylakoid membrane. Its function is as follows. One of the components of the core complex of photosystem II (PSII). PSII is a light-driven water:plastoquinone oxidoreductase that uses light energy to abstract electrons from H(2)O, generating O(2) and a proton gradient subsequently used for ATP formation. It consists of a core antenna complex that captures photons, and an electron transfer chain that converts photonic excitation into a charge separation. This subunit is found at the monomer-monomer interface and is required for correct PSII assembly and/or dimerization. The chain is Photosystem II reaction center protein L from Nandina domestica (Heavenly bamboo).